A 290-amino-acid chain; its full sequence is MSIVVARLAGGLGNQMFQYAKGYAESVERNSSLKLDLRGYKNYTLHGGFRLDKLNIDNTFVMSKKEMCIFPNFIVRAINKFPKLSLCSKRFESEQYSKKINGSMKGSVEFIGFWQNERYFLEHKEKLREIFTPININLDAKELSDVIRCTNSVSVHIRRGDYVSNVEALKIHGLCTERYYIDSIRYLKERFNNLVFFVFSDDIEWCKKYKNEIFSRSDDVKFIEGNTQEVDMWLMSNAKYHIIANSSFSWWGAWLKNYDLGITIAPTPWFEREELNSFDPCPEKWVRIEK.

This sequence belongs to the glycosyltransferase 11 family. Requires Does not require a metal cofactor. as cofactor.

The catalysed reaction is GDP-beta-L-colitose + beta-D-galactosyl-(1-&gt;3)-N-acetyl-D-glucosamine = alpha-L-colitosyl-(1-&gt;2)-beta-D-galactosyl-(1-&gt;3)-N-acetyl-D-glucosamine + GDP + H(+). Its pathway is bacterial outer membrane biogenesis; LPS O-antigen biosynthesis. Addition of metal ions dramatically decreases the activity to 0-40%. Involved in the biosynthesis of the lipopolysaccharide (LPS) O-antigen region. Catalyzes the transfer of colitose from GDP-colitose to the galactose residue of beta-Gal-(1-&gt;3)-GlcNAc (lacto-N-biose) via an alpha1,2-linkage. Is specific for beta-Gal-(1-&gt;3)-GlcNAc, but can use GDP-L-fucose as the sugar donor with almost the same efficiency as GDP-L-colitose. This chain is Alpha-1,2-colitosyltransferase, found in Escherichia coli.